Here is a 413-residue protein sequence, read N- to C-terminus: Arginine biosynthesis bifunctional protein ArgJ (413 aa).

6 residues coordinate substrate: Thr-158, Lys-184, Thr-195, Glu-285, Asn-408, and Ser-413. The Nucleophile role is filled by Thr-195.

The protein belongs to the ArgJ family. Heterotetramer of two alpha and two beta chains.

The protein localises to the cytoplasm. The enzyme catalyses N(2)-acetyl-L-ornithine + L-glutamate = N-acetyl-L-glutamate + L-ornithine. It catalyses the reaction L-glutamate + acetyl-CoA = N-acetyl-L-glutamate + CoA + H(+). It participates in amino-acid biosynthesis; L-arginine biosynthesis; L-ornithine and N-acetyl-L-glutamate from L-glutamate and N(2)-acetyl-L-ornithine (cyclic): step 1/1. Its pathway is amino-acid biosynthesis; L-arginine biosynthesis; N(2)-acetyl-L-ornithine from L-glutamate: step 1/4. Functionally, catalyzes two activities which are involved in the cyclic version of arginine biosynthesis: the synthesis of N-acetylglutamate from glutamate and acetyl-CoA as the acetyl donor, and of ornithine by transacetylation between N(2)-acetylornithine and glutamate. The chain is Arginine biosynthesis bifunctional protein ArgJ from Agrobacterium fabrum (strain C58 / ATCC 33970) (Agrobacterium tumefaciens (strain C58)).